A 341-amino-acid chain; its full sequence is uncharacterized protein (341 aa).

The next 3 helical transmembrane spans lie at 6-26, 63-83, and 137-157; these read IIAG…TTLW, LLLC…WVLI, and AQGL…LSAV.

The protein resides in the cell membrane. This is an uncharacterized protein from Bacillus subtilis (strain 168).